The primary structure comprises 180 residues: Ribosome maturation factor RimM (180 aa).

Positions 104–177 constitute a PRC barrel domain; that stretch reads PEEFHDHQLV…RVVVDPPGGL (74 aa).

It belongs to the RimM family. In terms of assembly, binds ribosomal protein uS19.

It is found in the cytoplasm. An accessory protein needed during the final step in the assembly of 30S ribosomal subunit, possibly for assembly of the head region. Essential for efficient processing of 16S rRNA. May be needed both before and after RbfA during the maturation of 16S rRNA. It has affinity for free ribosomal 30S subunits but not for 70S ribosomes. The sequence is that of Ribosome maturation factor RimM from Salinispora arenicola (strain CNS-205).